The chain runs to 149 residues: Myosin, essential light chain (149 aa).

EF-hand domains are found at residues 7–42 (SMID…FGLN) and 79–114 (GSYE…LGEK).

As to quaternary structure, myosin is a hexamer of 2 heavy chains and 4 light chains (two regulatory light chains and two essential light chains).

This chain is Myosin, essential light chain, found in Branchiostoma floridae (Florida lancelet).